We begin with the raw amino-acid sequence, 289 residues long: Nucleotide-binding protein Francci3_1634 (289 aa).

ATP is bound at residue glycine 13–serine 20. Aspartate 64–glycine 67 lines the GTP pocket.

Belongs to the RapZ-like family.

In terms of biological role, displays ATPase and GTPase activities. The protein is Nucleotide-binding protein Francci3_1634 of Frankia casuarinae (strain DSM 45818 / CECT 9043 / HFP020203 / CcI3).